The sequence spans 360 residues: Aminomethyltransferase (360 aa).

It belongs to the GcvT family. As to quaternary structure, the glycine cleavage system is composed of four proteins: P, T, L and H.

The enzyme catalyses N(6)-[(R)-S(8)-aminomethyldihydrolipoyl]-L-lysyl-[protein] + (6S)-5,6,7,8-tetrahydrofolate = N(6)-[(R)-dihydrolipoyl]-L-lysyl-[protein] + (6R)-5,10-methylene-5,6,7,8-tetrahydrofolate + NH4(+). The glycine cleavage system catalyzes the degradation of glycine. The protein is Aminomethyltransferase of Pseudomonas aeruginosa (strain ATCC 15692 / DSM 22644 / CIP 104116 / JCM 14847 / LMG 12228 / 1C / PRS 101 / PAO1).